Reading from the N-terminus, the 227-residue chain is Transmembrane emp24 domain-containing protein 1 (227 aa).

Residues 1–23 form the signal peptide; it reads MMAAGAALALALWLLMPPVGVGG. Residues 24-194 lie on the Extracellular side of the membrane; that stretch reads AGPPPIQDGE…LQEGNLERVN (171 aa). One can recognise a GOLD domain in the interval 43-125; sequence KQCFYQSAPA…EKLVFFELIF (83 aa). The stretch at 145 to 170 forms a coiled coil; sequence EMLDVKMEDIKESIETMRTRLERSIQ. The helical transmembrane segment at 195-215 threads the bilayer; it reads FWSAVNVAVLLLVAVLQVCTL. Over 216–227 the chain is Cytoplasmic; it reads KRFFQDKRPVPT. The short motif at 218–219 is the COPII vesicle coat-binding element; that stretch reads FF. A COPI vesicle coat-binding motif is present at residues 218–227; the sequence is FFQDKRPVPT.

This sequence belongs to the EMP24/GP25L family. As to quaternary structure, homodimer in endoplasmic reticulum, endoplasmic reticulum-Golgi intermediate compartment and cis-Golgi network. Interacts with IL1RL1. Interacts with RNF26; this interaction is important to modulate innate immune signaling through the cGAS-STING pathway.

It localises to the cell membrane. The protein localises to the endoplasmic reticulum membrane. It is found in the golgi apparatus. Its subcellular location is the cis-Golgi network membrane. The protein resides in the endoplasmic reticulum-Golgi intermediate compartment membrane. In terms of biological role, potential role in vesicular protein trafficking, mainly in the early secretory pathway. May act as a cargo receptor at the lumenal side for incorporation of secretory cargo molecules into transport vesicles and may be involved in vesicle coat formation at the cytoplasmic side. Plays a positive role in IL-33-mediated IL-8 and IL-6 production by interacting with interleukin-33 receptor IL1RL1. Plays also a role in the modulation of innate immune signaling through the cGAS-STING pathway by interacting with RNF26. This Pongo abelii (Sumatran orangutan) protein is Transmembrane emp24 domain-containing protein 1 (TMED1).